The primary structure comprises 297 residues: N-acetylmuramic acid 6-phosphate etherase (297 aa).

In terms of domain architecture, SIS spans 55-218 (AAKRYSKGGR…STGVMIKQGK (164 aa)). The active-site Proton donor is the Glu83. Residue Glu114 is part of the active site.

It belongs to the GCKR-like family. MurNAc-6-P etherase subfamily. Homodimer.

It carries out the reaction N-acetyl-D-muramate 6-phosphate + H2O = N-acetyl-D-glucosamine 6-phosphate + (R)-lactate. The protein operates within amino-sugar metabolism; N-acetylmuramate degradation. Specifically catalyzes the cleavage of the D-lactyl ether substituent of MurNAc 6-phosphate, producing GlcNAc 6-phosphate and D-lactate. The sequence is that of N-acetylmuramic acid 6-phosphate etherase from Lactobacillus gasseri (strain ATCC 33323 / DSM 20243 / BCRC 14619 / CIP 102991 / JCM 1131 / KCTC 3163 / NCIMB 11718 / NCTC 13722 / AM63).